Consider the following 917-residue polypeptide: Spermatogenesis-associated protein 31D3 (917 aa).

Residues 29–49 (FICLSGLGLFILYLFYMVLTL) form a helical membrane-spanning segment. 3 disordered regions span residues 55–80 (EKNN…KDRK), 152–195 (SVSP…PPPL), and 773–797 (SQET…LRSN). Positions 63–74 (HQGRARRKRKSV) are enriched in basic residues. The segment covering 152–163 (SVSPLASSASGA) has biased composition (low complexity). Residues 164–177 (ESSFTLASTPSATT) show a composition bias toward polar residues. Basic and acidic residues predominate over residues 782–797 (LLHDPETSSEEDLRSN).

Belongs to the SPATA31 family.

The protein localises to the membrane. In terms of biological role, may play a role in spermatogenesis. The sequence is that of Spermatogenesis-associated protein 31D3 (SPATA31D3) from Homo sapiens (Human).